The primary structure comprises 105 residues: UPF0145 protein (105 aa).

The protein belongs to the UPF0145 family.

The chain is UPF0145 protein from Enterococcus faecalis (Streptococcus faecalis).